The sequence spans 569 residues: Myotubularin-related protein 9 (569 aa).

Positions 134–513 constitute a Myotubularin phosphatase domain; sequence GWSAFDLEQE…QCIKIWDRLF (380 aa).

The protein belongs to the protein-tyrosine phosphatase family. Non-receptor class myotubularin subfamily. In terms of assembly, heterodimer with lipid phosphatase mtm-6.

It is found in the cytoplasm. Its subcellular location is the membrane. May act as a regulatory subunit for mtm-6. In association with phosphatase mtm-6, plays a role in endosome trafficking probably by regulating phosphatidylinositol-3-phosphate levels. Regulates fluid phase endocytosis in coelomocytes. Regulates posterior migration of QL neuroblast descendants and the anterior migration of QR neuroblast descendants and HSN neurons during larval development probably by controlling Wnt ligand secretion through the regulation of sorting receptor mig-14 trafficking. Involved in the formation of correct synapse number in DA9 motor neurons. The protein is Myotubularin-related protein 9 of Caenorhabditis elegans.